We begin with the raw amino-acid sequence, 579 residues long: YTH domain-containing family protein 2 (579 aa).

Positions 1-45 (MSASSLLEQRPKGQGNKVQNGSVHQKDGLNDDDFEPYLSPQARPN) are disordered. Serine 2 is modified (N-acetylserine). Residues serine 2, serine 4, serine 5, serine 22, serine 39, and serine 196 each carry the phosphoserine modification. Residues 2–384 (SASSLLEQRP…QAGSGSTPSE (383 aa)) are localization to mRNA processing bodies (P-bodies). The disordered stretch occupies residues 247–387 (AKQQPKLKTK…SGSTPSEPHP (141 aa)). Residues 291 to 316 (ALVQNIGQPTQGSPQHVGQQANNSPP) show a composition bias toward polar residues. The segment covering 337–349 (AQLSVQQQAAQPT) has biased composition (low complexity). Serine 359 is modified (phosphoserine). Gly residues predominate over residues 359-371 (SGFGHNGVDGNGV). Residues 372-383 (GQSQAGSGSTPS) show a composition bias toward polar residues. Residues 385–579 (PHPVLEKLRS…VKKERQGRGK (195 aa)) are interaction with m6A-containing mRNAs. Position 394 is a phosphoserine (serine 394). One can recognise a YTH domain in the interval 410–544 (GRVFIIKSYS…EKAKQVLKII (135 aa)). Residues 416–418 (KSY), aspartate 422, 432–433 (WC), asparagine 462, tryptophan 486, and tryptophan 491 contribute to the RNA site.

The protein belongs to the YTHDF family. YTHDF2 subfamily. Interacts with CNOT1; interaction is direct and promotes recruitment of the CCR4-NOT complex. Interacts with YTHDF3. Interacts with RIDA/HRSP12; interaction leads to recruitment of the ribonuclease P/MRP complex. Ubiquitinated by the SCF(SKP2) complex, leading to its degradation.

It is found in the cytoplasm. The protein resides in the cytosol. It localises to the P-body. The protein localises to the stress granule. Its subcellular location is the nucleus. Functionally, specifically recognizes and binds N6-methyladenosine (m6A)-containing RNAs, and regulates their stability. M6A is a modification present at internal sites of mRNAs and some non-coding RNAs and plays a role in mRNA stability and processing. Acts as a regulator of mRNA stability by promoting degradation of m6A-containing mRNAs via interaction with the CCR4-NOT and ribonuclease P/MRP complexes, depending on the context. The YTHDF paralogs (YTHDF1, YTHDF2 and YTHDF3) share m6A-containing mRNAs targets and act redundantly to mediate mRNA degradation and cellular differentiation. M6A-containing mRNAs containing a binding site for RIDA/HRSP12 (5'-GGUUC-3') are preferentially degraded by endoribonucleolytic cleavage: cooperative binding of RIDA/HRSP12 and YTHDF2 to transcripts leads to recruitment of the ribonuclease P/MRP complex. Other m6A-containing mRNAs undergo deadenylation via direct interaction between YTHDF2 and CNOT1, leading to recruitment of the CCR4-NOT and subsequent deadenylation of m6A-containing mRNAs. Required maternally to regulate oocyte maturation: probably acts by binding to m6A-containing mRNAs, thereby regulating maternal transcript dosage during oocyte maturation, which is essential for the competence of oocytes to sustain early zygotic development. Also required during spermatogenesis: regulates spermagonial adhesion by promoting degradation of m6A-containing transcripts coding for matrix metallopeptidases. Also involved in hematopoietic stem cells specification by binding to m6A-containing mRNAs, leading to promote their degradation. Also acts as a regulator of neural development by promoting m6A-dependent degradation of neural development-related mRNA targets. Inhibits neural specification of induced pluripotent stem cells by binding to methylated neural-specific mRNAs and promoting their degradation, thereby restraining neural differentiation. Regulates circadian regulation of hepatic lipid metabolism: acts by promoting m6A-dependent degradation of PPARA transcripts. Regulates the innate immune response to infection by inhibiting the type I interferon response: acts by binding to m6A-containing IFNB transcripts and promoting their degradation. May also act as a promoter of cap-independent mRNA translation following heat shock stress: upon stress, relocalizes to the nucleus and specifically binds mRNAs with some m6A methylation mark at their 5'-UTR, protecting demethylation of mRNAs by FTO, thereby promoting cap-independent mRNA translation. Regulates mitotic entry by promoting the phase-specific m6A-dependent degradation of WEE1 transcripts. Promotes formation of phase-separated membraneless compartments, such as P-bodies or stress granules, by undergoing liquid-liquid phase separation upon binding to mRNAs containing multiple m6A-modified residues: polymethylated mRNAs act as a multivalent scaffold for the binding of YTHDF proteins, juxtaposing their disordered regions and thereby leading to phase separation. The resulting mRNA-YTHDF complexes then partition into different endogenous phase-separated membraneless compartments, such as P-bodies, stress granules or neuronal RNA granules. May also recognize and bind RNAs modified by C5-methylcytosine (m5C) and act as a regulator of rRNA processing. This is YTH domain-containing family protein 2 from Macaca fascicularis (Crab-eating macaque).